A 446-amino-acid polypeptide reads, in one-letter code: N-succinylarginine dihydrolase (446 aa).

Substrate-binding positions include 19 to 28 (AGLSYGNVAS), Asn110, and 137 to 138 (HR). Residue Glu174 is part of the active site. Arg214 serves as a coordination point for substrate. Residue His250 is part of the active site. Positions 252 and 363 each coordinate substrate. Residue Cys369 is the Nucleophile of the active site.

It belongs to the succinylarginine dihydrolase family. Homodimer.

It catalyses the reaction N(2)-succinyl-L-arginine + 2 H2O + 2 H(+) = N(2)-succinyl-L-ornithine + 2 NH4(+) + CO2. Its pathway is amino-acid degradation; L-arginine degradation via AST pathway; L-glutamate and succinate from L-arginine: step 2/5. In terms of biological role, catalyzes the hydrolysis of N(2)-succinylarginine into N(2)-succinylornithine, ammonia and CO(2). The protein is N-succinylarginine dihydrolase of Pseudoalteromonas atlantica (strain T6c / ATCC BAA-1087).